The primary structure comprises 437 residues: Gamma-glutamyl phosphate reductase (437 aa).

This sequence belongs to the gamma-glutamyl phosphate reductase family.

It localises to the cytoplasm. The catalysed reaction is L-glutamate 5-semialdehyde + phosphate + NADP(+) = L-glutamyl 5-phosphate + NADPH + H(+). It participates in amino-acid biosynthesis; L-proline biosynthesis; L-glutamate 5-semialdehyde from L-glutamate: step 2/2. Its function is as follows. Catalyzes the NADPH-dependent reduction of L-glutamate 5-phosphate into L-glutamate 5-semialdehyde and phosphate. The product spontaneously undergoes cyclization to form 1-pyrroline-5-carboxylate. This Synechococcus sp. (strain CC9902) protein is Gamma-glutamyl phosphate reductase.